A 169-amino-acid polypeptide reads, in one-letter code: Protein-export protein SecB (169 aa).

This sequence belongs to the SecB family. As to quaternary structure, homotetramer, a dimer of dimers. One homotetramer interacts with 1 SecA dimer.

The protein resides in the cytoplasm. Its function is as follows. One of the proteins required for the normal export of preproteins out of the cell cytoplasm. It is a molecular chaperone that binds to a subset of precursor proteins, maintaining them in a translocation-competent state. It also specifically binds to its receptor SecA. The polypeptide is Protein-export protein SecB (Mannheimia succiniciproducens (strain KCTC 0769BP / MBEL55E)).